The primary structure comprises 508 residues: ATP synthase subunit alpha, mitochondrial (508 aa).

171–178 (GDRQTGKT) provides a ligand contact to ATP.

Belongs to the ATPase alpha/beta chains family. In terms of assembly, F-type ATPases have 2 components, CF(1) - the catalytic core - and CF(0) - the membrane proton channel. CF(1) has five subunits: alpha(3), beta(3), gamma(1), delta(1), epsilon(1). CF(0) has three main subunits: a, b and c.

Its subcellular location is the mitochondrion. It localises to the mitochondrion inner membrane. Its function is as follows. Mitochondrial membrane ATP synthase (F(1)F(0) ATP synthase or Complex V) produces ATP from ADP in the presence of a proton gradient across the membrane which is generated by electron transport complexes of the respiratory chain. F-type ATPases consist of two structural domains, F(1) - containing the extramembraneous catalytic core, and F(0) - containing the membrane proton channel, linked together by a central stalk and a peripheral stalk. During catalysis, ATP synthesis in the catalytic domain of F(1) is coupled via a rotary mechanism of the central stalk subunits to proton translocation. Subunits alpha and beta form the catalytic core in F(1). Rotation of the central stalk against the surrounding alpha(3)beta(3) subunits leads to hydrolysis of ATP in three separate catalytic sites on the beta subunits. Subunit alpha does not bear the catalytic high-affinity ATP-binding sites. This Zea mays (Maize) protein is ATP synthase subunit alpha, mitochondrial (ATPA).